The primary structure comprises 217 residues: GTP-binding protein Rit2 (217 aa).

GTP contacts are provided by residues 27–34, 74–78, and 133–136; these read GAGGVGKS, DTAGQ, and NKID.

The protein belongs to the small GTPase superfamily. Ras family. Interacts with AFDN, the C-terminal domain of RALGDS and RLF, but not with RIN1 and PIK3CA. RLF binds exclusively to the active GTP-bound form. Binds calmodulin. Interacts with PLXNB3.

The protein localises to the nucleus. It is found in the cell membrane. It catalyses the reaction GTP + H2O = GDP + phosphate + H(+). Alternates between an inactive form bound to GDP and an active form bound to GTP. In terms of biological role, binds and exchanges GTP and GDP. This chain is GTP-binding protein Rit2 (Rit2), found in Rattus norvegicus (Rat).